Reading from the N-terminus, the 30-residue chain is Cyclotide cter-Q (30 aa).

The segment at residues 1 to 30 (GIPCGESCVFIPCISTVIGCSCKNKVCYRN) is a cross-link (cyclopeptide (Gly-Asn)). 3 disulfides stabilise this stretch: C4/C20, C8/C22, and C13/C27.

In terms of processing, this is a cyclic peptide.

The protein localises to the secreted. Functionally, probably participates in a plant defense mechanism. This is Cyclotide cter-Q from Clitoria ternatea (Butterfly pea).